The chain runs to 608 residues: Putative multicopper oxidase GMC1 (608 aa).

3 Plastocyanin-like domains span residues 51-163 (INGY…LIVE), 243-374 (LING…ELYR), and 421-548 (ERTF…FEVP). Residues His100, His102, His145, and His147 each contribute to the Cu cation site. Cu cation-binding residues include His452, His455, His457, His530, Cys531, His532, and His536.

It belongs to the multicopper oxidase family. Cu cation serves as cofactor.

Could be an iron transport multicopper oxidase, which is required for Fe(2+) high affinity uptake. May be required to oxidize Fe(2+) and release it from the transporter. Essential component of copper-dependent iron transport. Involved in meiotic prophase and synaptonemal complex (SC) assembly. The sequence is that of Putative multicopper oxidase GMC1 (GMC1) from Saccharomyces cerevisiae (strain ATCC 204508 / S288c) (Baker's yeast).